The sequence spans 342 residues: MEAVQQNHSVCRGYCGVMLRSRSGGFFRRGFMLGNVEVILARPRGFCAGVERAVRTLESVASRYAGTREVYALHEIVHNLHVVNSFKKMGVKFVSALHEVPEGAVLVFSAHGVSQQVKEESRRKGLTVVDATCPLVTKVHLEIQRYDKSGYQVILVGHKGHREVEGSMGQVSNPVVLVQNVQDVQSIKIPSAAKLAYVTQTTLSMDDTAEIISALKLRFPRIVGPDLRDICYATQNRQTAVKAMSQMVDVVLAIGSKNSSNSNRLLDLAKAQNARAYLIDSYRNIDLEWLIGARRIGITAGASAPEILVQEVIDYLGLHANLKVRTMDGVSENITFKLPELD.

Residue C47 participates in [4Fe-4S] cluster binding. 2 residues coordinate (2E)-4-hydroxy-3-methylbut-2-enyl diphosphate: H78 and H111. Positions 78 and 111 each coordinate dimethylallyl diphosphate. Residues H78 and H111 each coordinate isopentenyl diphosphate. C133 contacts [4Fe-4S] cluster. H161 serves as a coordination point for (2E)-4-hydroxy-3-methylbut-2-enyl diphosphate. H161 serves as a coordination point for dimethylallyl diphosphate. Isopentenyl diphosphate is bound at residue H161. E163 acts as the Proton donor in catalysis. Position 201 (T201) interacts with (2E)-4-hydroxy-3-methylbut-2-enyl diphosphate. A [4Fe-4S] cluster-binding site is contributed by C231. Residues S259, S260, N261, and S303 each coordinate (2E)-4-hydroxy-3-methylbut-2-enyl diphosphate. Dimethylallyl diphosphate-binding residues include S259, S260, N261, and S303. Isopentenyl diphosphate-binding residues include S259, S260, N261, and S303.

This sequence belongs to the IspH family. It depends on [4Fe-4S] cluster as a cofactor.

It carries out the reaction isopentenyl diphosphate + 2 oxidized [2Fe-2S]-[ferredoxin] + H2O = (2E)-4-hydroxy-3-methylbut-2-enyl diphosphate + 2 reduced [2Fe-2S]-[ferredoxin] + 2 H(+). It catalyses the reaction dimethylallyl diphosphate + 2 oxidized [2Fe-2S]-[ferredoxin] + H2O = (2E)-4-hydroxy-3-methylbut-2-enyl diphosphate + 2 reduced [2Fe-2S]-[ferredoxin] + 2 H(+). It participates in isoprenoid biosynthesis; dimethylallyl diphosphate biosynthesis; dimethylallyl diphosphate from (2E)-4-hydroxy-3-methylbutenyl diphosphate: step 1/1. Its pathway is isoprenoid biosynthesis; isopentenyl diphosphate biosynthesis via DXP pathway; isopentenyl diphosphate from 1-deoxy-D-xylulose 5-phosphate: step 6/6. Functionally, catalyzes the conversion of 1-hydroxy-2-methyl-2-(E)-butenyl 4-diphosphate (HMBPP) into a mixture of isopentenyl diphosphate (IPP) and dimethylallyl diphosphate (DMAPP). Acts in the terminal step of the DOXP/MEP pathway for isoprenoid precursor biosynthesis. The sequence is that of 4-hydroxy-3-methylbut-2-enyl diphosphate reductase from Anaplasma marginale (strain St. Maries).